A 140-amino-acid polypeptide reads, in one-letter code: Ribosome-binding factor A (140 aa).

This sequence belongs to the RbfA family. As to quaternary structure, monomer. Binds 30S ribosomal subunits, but not 50S ribosomal subunits or 70S ribosomes.

Its subcellular location is the cytoplasm. One of several proteins that assist in the late maturation steps of the functional core of the 30S ribosomal subunit. Associates with free 30S ribosomal subunits (but not with 30S subunits that are part of 70S ribosomes or polysomes). Required for efficient processing of 16S rRNA. May interact with the 5'-terminal helix region of 16S rRNA. In Cereibacter sphaeroides (strain ATCC 17023 / DSM 158 / JCM 6121 / CCUG 31486 / LMG 2827 / NBRC 12203 / NCIMB 8253 / ATH 2.4.1.) (Rhodobacter sphaeroides), this protein is Ribosome-binding factor A.